The primary structure comprises 566 residues: Developmental regulatory protein wetA (566 aa).

5 disordered regions span residues 116–174 (VPAV…LMRP), 232–316 (STEG…SDSL), 334–364 (AWWP…SIQS), 381–400 (SSFD…VTSA), and 429–542 (PPVQ…RRRK). Composition is skewed to polar residues over residues 165–174 (QSFSPSLMRP) and 269–291 (AQQQ…SSPP). Low complexity predominate over residues 298-316 (SSPHSSDPQSLSSWHSDSL). Composition is skewed to polar residues over residues 347 to 364 (PSYQ…SIQS) and 381 to 398 (SSFD…SVVT). Residues 435–448 (SRSPSLSPRGRGSP) are compositionally biased toward low complexity. Residues 449 to 462 (TQGSPLRNEASTKT) are compositionally biased toward polar residues. Basic residues predominate over residues 463-473 (SPHRRGYHGRK). The span at 482-500 (PKPVKGPNSSSPGSGSNKS) shows a compositional bias: low complexity. Residues 501 to 511 (LTVSFVNFTPN) are compositionally biased toward polar residues.

It belongs to the wetA family.

BrlA, abaA and wetA are pivotal regulators of conidiophore development and conidium maturation. They act individually and together to regulate their own expression and that of numerous other sporulation-specific genes. Plays an essential role in the completion of conidial maturation and is essential for trehalose biogenesis in conidia. Negatively regulates expression of the melanin biosynthetic gene cluster. Also plays an a role in the early phase of fungal growth including proper hyphal branching. In Aspergillus fumigatus (strain ATCC MYA-4609 / CBS 101355 / FGSC A1100 / Af293) (Neosartorya fumigata), this protein is Developmental regulatory protein wetA.